Reading from the N-terminus, the 159-residue chain is NAD(P)H-quinone oxidoreductase subunit J, chloroplastic (159 aa).

This sequence belongs to the complex I 30 kDa subunit family. NDH is composed of at least 16 different subunits, 5 of which are encoded in the nucleus.

The protein resides in the plastid. It localises to the chloroplast thylakoid membrane. It catalyses the reaction a plastoquinone + NADH + (n+1) H(+)(in) = a plastoquinol + NAD(+) + n H(+)(out). The catalysed reaction is a plastoquinone + NADPH + (n+1) H(+)(in) = a plastoquinol + NADP(+) + n H(+)(out). Its function is as follows. NDH shuttles electrons from NAD(P)H:plastoquinone, via FMN and iron-sulfur (Fe-S) centers, to quinones in the photosynthetic chain and possibly in a chloroplast respiratory chain. The immediate electron acceptor for the enzyme in this species is believed to be plastoquinone. Couples the redox reaction to proton translocation, and thus conserves the redox energy in a proton gradient. In Populus trichocarpa (Western balsam poplar), this protein is NAD(P)H-quinone oxidoreductase subunit J, chloroplastic.